A 170-amino-acid polypeptide reads, in one-letter code: MSHMLSIEPLTREAFAPFGSVIEADPASMRFINGGNTERFHALARVDAAGEGAGVIINIFRGQPRVFPYSVTMMERHPLGSQSFSPLRDRPWLVVVAEDQGDRPGRPRVFIADGRQGVNYGRNVWHHPLMSVGAVSEFIVVDREGPGNNLEEFHYDEAFVIPDPSSEELR.

It belongs to the ureidoglycolate lyase family. As to quaternary structure, homodimer. Ni(2+) is required as a cofactor.

It catalyses the reaction (S)-ureidoglycolate = urea + glyoxylate. The protein operates within nitrogen metabolism; (S)-allantoin degradation. Catalyzes the catabolism of the allantoin degradation intermediate (S)-ureidoglycolate, generating urea and glyoxylate. Involved in the utilization of allantoin as nitrogen source. The sequence is that of Ureidoglycolate lyase 1 from Rhizobium meliloti (strain 1021) (Ensifer meliloti).